Here is a 420-residue protein sequence, read N- to C-terminus: 4-hydroxy-3-methylbut-2-en-1-yl diphosphate synthase (flavodoxin) (420 aa).

The [4Fe-4S] cluster site is built by Cys-307, Cys-310, Cys-353, and Glu-360.

This sequence belongs to the IspG family. It depends on [4Fe-4S] cluster as a cofactor.

The catalysed reaction is (2E)-4-hydroxy-3-methylbut-2-enyl diphosphate + oxidized [flavodoxin] + H2O + 2 H(+) = 2-C-methyl-D-erythritol 2,4-cyclic diphosphate + reduced [flavodoxin]. It functions in the pathway isoprenoid biosynthesis; isopentenyl diphosphate biosynthesis via DXP pathway; isopentenyl diphosphate from 1-deoxy-D-xylulose 5-phosphate: step 5/6. Its function is as follows. Converts 2C-methyl-D-erythritol 2,4-cyclodiphosphate (ME-2,4cPP) into 1-hydroxy-2-methyl-2-(E)-butenyl 4-diphosphate. The chain is 4-hydroxy-3-methylbut-2-en-1-yl diphosphate synthase (flavodoxin) from Brucella suis (strain ATCC 23445 / NCTC 10510).